Here is an 800-residue protein sequence, read N- to C-terminus: Probable replication endonuclease from prophage-like region (800 aa).

Catalysis depends on O-(5'-phospho-DNA)-tyrosine intermediate residues tyrosine 503 and tyrosine 507.

It belongs to the phage GPA family.

Functionally, possible endonuclease which induces a single-strand cut and initiates DNA replication. The polypeptide is Probable replication endonuclease from prophage-like region (Salmonella paratyphi A (strain ATCC 9150 / SARB42)).